A 263-amino-acid polypeptide reads, in one-letter code: NADH dehydrogenase [ubiquinone] iron-sulfur protein 3, mitochondrial (263 aa).

The transit peptide at 1-35 directs the protein to the mitochondrion; it reads MVAAVARLWWRGLLGASALTRGAGRPSVLLLPVRR.

It belongs to the complex I 30 kDa subunit family. Core subunit of respiratory chain NADH dehydrogenase (Complex I) which is composed of 45 different subunits. Interacts with NDUFAF3. Interacts with RAB5IF. Found in subcomplexes containing subunits NDUFS2, MT-ND1 and NDUFA13.

The protein resides in the mitochondrion inner membrane. It carries out the reaction a ubiquinone + NADH + 5 H(+)(in) = a ubiquinol + NAD(+) + 4 H(+)(out). Its function is as follows. Core subunit of the mitochondrial membrane respiratory chain NADH dehydrogenase (Complex I) which catalyzes electron transfer from NADH through the respiratory chain, using ubiquinone as an electron acceptor. Essential for the catalytic activity and assembly of complex I. The sequence is that of NADH dehydrogenase [ubiquinone] iron-sulfur protein 3, mitochondrial (NDUFS3) from Gorilla gorilla gorilla (Western lowland gorilla).